Reading from the N-terminus, the 940-residue chain is DNA gyrase subunit A (940 aa).

The interval 1 to 22 is disordered; sequence MSDHTNPPSAPPDDDPNGGSLL. Residues 48-538 enclose the Topo IIA-type catalytic domain; the sequence is LPDARDGLKP…SLADQDDESL (491 aa). Residue Tyr-136 is the O-(5'-phospho-DNA)-tyrosine intermediate of the active site. The GyrA-box signature appears at 565-571; the sequence is QHRGGRG. Positions 914 to 924 are enriched in acidic residues; that stretch reads ESVDDNGDDAD. A disordered region spans residues 914-940; it reads ESVDDNGDDADSVAPAAPDGQVTDSDD.

Belongs to the type II topoisomerase GyrA/ParC subunit family. Heterotetramer, composed of two GyrA and two GyrB chains. In the heterotetramer, GyrA contains the active site tyrosine that forms a transient covalent intermediate with DNA, while GyrB binds cofactors and catalyzes ATP hydrolysis.

Its subcellular location is the cytoplasm. It catalyses the reaction ATP-dependent breakage, passage and rejoining of double-stranded DNA.. In terms of biological role, a type II topoisomerase that negatively supercoils closed circular double-stranded (ds) DNA in an ATP-dependent manner to modulate DNA topology and maintain chromosomes in an underwound state. Negative supercoiling favors strand separation, and DNA replication, transcription, recombination and repair, all of which involve strand separation. Also able to catalyze the interconversion of other topological isomers of dsDNA rings, including catenanes and knotted rings. Type II topoisomerases break and join 2 DNA strands simultaneously in an ATP-dependent manner. This chain is DNA gyrase subunit A, found in Granulibacter bethesdensis (strain ATCC BAA-1260 / CGDNIH1).